Consider the following 229-residue polypeptide: Cytochrome c oxidase subunit 2 (229 aa).

Residues Met1–His26 are Mitochondrial intermembrane-facing. The chain crosses the membrane as a helical span at residues Ala27–Asn48. Over Ser49 to Glu62 the chain is Mitochondrial matrix. A helical membrane pass occupies residues Met63 to Arg82. Topologically, residues Leu83 to Ser229 are mitochondrial intermembrane. Residues His161, Cys196, Glu198, Cys200, His204, and Met207 each contribute to the Cu cation site. Residue Glu198 participates in Mg(2+) binding.

The protein belongs to the cytochrome c oxidase subunit 2 family. In terms of assembly, component of the cytochrome c oxidase (complex IV, CIV), a multisubunit enzyme composed of a catalytic core of 3 subunits and several supernumerary subunits. The complex exists as a monomer or a dimer and forms supercomplexes (SCs) in the inner mitochondrial membrane with ubiquinol-cytochrome c oxidoreductase (cytochrome b-c1 complex, complex III, CIII). Cu cation serves as cofactor.

The protein resides in the mitochondrion inner membrane. The enzyme catalyses 4 Fe(II)-[cytochrome c] + O2 + 8 H(+)(in) = 4 Fe(III)-[cytochrome c] + 2 H2O + 4 H(+)(out). Functionally, component of the cytochrome c oxidase, the last enzyme in the mitochondrial electron transport chain which drives oxidative phosphorylation. The respiratory chain contains 3 multisubunit complexes succinate dehydrogenase (complex II, CII), ubiquinol-cytochrome c oxidoreductase (cytochrome b-c1 complex, complex III, CIII) and cytochrome c oxidase (complex IV, CIV), that cooperate to transfer electrons derived from NADH and succinate to molecular oxygen, creating an electrochemical gradient over the inner membrane that drives transmembrane transport and the ATP synthase. Cytochrome c oxidase is the component of the respiratory chain that catalyzes the reduction of oxygen to water. Electrons originating from reduced cytochrome c in the intermembrane space (IMS) are transferred via the dinuclear copper A center (CU(A)) of subunit 2 and heme A of subunit 1 to the active site in subunit 1, a binuclear center (BNC) formed by heme A3 and copper B (CU(B)). The BNC reduces molecular oxygen to 2 water molecules using 4 electrons from cytochrome c in the IMS and 4 protons from the mitochondrial matrix. The sequence is that of Cytochrome c oxidase subunit 2 (mt:CoII) from Drosophila narragansett (Fruit fly).